A 201-amino-acid chain; its full sequence is B-cell CLL/lymphoma 7 protein family member B-B (201 aa).

A disordered region spans residues Gln-104 to Ser-201.

Belongs to the BCL7 family.

The sequence is that of B-cell CLL/lymphoma 7 protein family member B-B from Danio rerio (Zebrafish).